Reading from the N-terminus, the 243-residue chain is Probable transcriptional regulatory protein BAV2207 (243 aa).

Residues 1–21 (MAGHSKWANIQHRKGRQDAKR) are disordered.

The protein belongs to the TACO1 family.

Its subcellular location is the cytoplasm. The polypeptide is Probable transcriptional regulatory protein BAV2207 (Bordetella avium (strain 197N)).